A 681-amino-acid polypeptide reads, in one-letter code: Heat shock 70 kDa protein (681 aa).

The span at 655-665 (NFPGGMPGAGM) shows a compositional bias: gly residues. Residues 655-681 (NFPGGMPGAGMPGNAPAGSGPTVEEVD) form a disordered region. The segment covering 666–675 (PGNAPAGSGP) has biased composition (low complexity).

Belongs to the heat shock protein 70 family.

This is Heat shock 70 kDa protein from Plasmodium falciparum.